Reading from the N-terminus, the 382-residue chain is Lipid-A-disaccharide synthase (382 aa).

This sequence belongs to the LpxB family.

The enzyme catalyses 2-N,3-O-bis[(3R)-3-hydroxytetradecanoyl]-alpha-D-glucosaminyl 1-phosphate + UDP-2-N,3-O-bis[(3R)-3-hydroxytetradecanoyl]-alpha-D-glucosamine = lipid A disaccharide (E. coli) + UDP + H(+). It carries out the reaction a lipid X + a UDP-2-N,3-O-bis[(3R)-3-hydroxyacyl]-alpha-D-glucosamine = a lipid A disaccharide + UDP + H(+). The protein operates within glycolipid biosynthesis; lipid IV(A) biosynthesis; lipid IV(A) from (3R)-3-hydroxytetradecanoyl-[acyl-carrier-protein] and UDP-N-acetyl-alpha-D-glucosamine: step 5/6. Its function is as follows. Condensation of UDP-2,3-diacylglucosamine and 2,3-diacylglucosamine-1-phosphate to form lipid A disaccharide, a precursor of lipid A, a phosphorylated glycolipid that anchors the lipopolysaccharide to the outer membrane of the cell. The chain is Lipid-A-disaccharide synthase from Shigella boydii serotype 18 (strain CDC 3083-94 / BS512).